Reading from the N-terminus, the 310-residue chain is Methionyl-tRNA formyltransferase (310 aa).

108 to 111 is a (6S)-5,6,7,8-tetrahydrofolate binding site; the sequence is SLLP.

The protein belongs to the Fmt family.

The enzyme catalyses L-methionyl-tRNA(fMet) + (6R)-10-formyltetrahydrofolate = N-formyl-L-methionyl-tRNA(fMet) + (6S)-5,6,7,8-tetrahydrofolate + H(+). Functionally, attaches a formyl group to the free amino group of methionyl-tRNA(fMet). The formyl group appears to play a dual role in the initiator identity of N-formylmethionyl-tRNA by promoting its recognition by IF2 and preventing the misappropriation of this tRNA by the elongation apparatus. This chain is Methionyl-tRNA formyltransferase, found in Fusobacterium nucleatum subsp. nucleatum (strain ATCC 25586 / DSM 15643 / BCRC 10681 / CIP 101130 / JCM 8532 / KCTC 2640 / LMG 13131 / VPI 4355).